A 98-amino-acid polypeptide reads, in one-letter code: Citrate lyase acyl carrier protein (98 aa).

Serine 14 bears the O-(phosphoribosyl dephospho-coenzyme A)serine mark.

The protein belongs to the CitD family. Oligomer with a subunit composition of (alpha,beta,gamma)6.

The protein resides in the cytoplasm. Functionally, covalent carrier of the coenzyme of citrate lyase. The chain is Citrate lyase acyl carrier protein from Escherichia coli O127:H6 (strain E2348/69 / EPEC).